We begin with the raw amino-acid sequence, 426 residues long: Pannexin-1 (426 aa).

Over 1–40 (MAIAHLATEYVFSDFLLKEPTEPKFKGLRLELAVDKMVTC) the chain is Cytoplasmic. Residue Cys40 is modified to S-nitrosocysteine. Residues 41–61 (IAVGLPLLLISLAFAQEISIG) form a helical membrane-spanning segment. At 62–106 (TQISCFSPSSFSWRQAAFVDSYCWAAVQQKNSLQSESGNLPLWLH) the chain is on the extracellular side. 2 disulfide bridges follow: Cys66–Cys264 and Cys84–Cys245. A helical membrane pass occupies residues 107 to 127 (KFFPYILLLFAILLYLPALFW). Residues 128–216 (RFAAAPHLCS…HLIMKYISCR (89 aa)) are Cytoplasmic-facing. Tyr198 is subject to Phosphotyrosine. The chain crosses the membrane as a helical span at residues 217–237 (LVTFAVVLLACIYLSYYFSLS). The Extracellular portion of the chain corresponds to 238-277 (SLSDEFLCSIKSGVLRNDSTIPDSFQCKLIAVGIFQLLSL). Asn254 carries an N-linked (GlcNAc...) asparagine glycan. A helical membrane pass occupies residues 278–298 (INLLVYALLVPVVIYTLFVPF). The Cytoplasmic portion of the chain corresponds to 299–426 (RQKTDVLKVY…SRQRLLNSSC (128 aa)). S-nitrosocysteine is present on Cys346. The tract at residues 407–426 (ETAANNGEKNSRQRLLNSSC) is disordered.

The protein belongs to the pannexin family. In terms of assembly, homoheptameric. S-nitrosylation inhibits channel currents and ATP release. Post-translationally, N-glycosylation plays a role in cell surface targeting. Glycosylation at its extracellular surface makes unlikely that two oligomers could dock to form an intercellular channel such as in gap junctions. Exists in three glycosylation states: non-glycosylated (GLY0), high-mannose glycosylated (GLY1), and fully mature glycosylated (GLY2). In terms of processing, cleaved by CASP3 and CASP7 during apoptosis. Cleavage opens the channel for the release of metabolites and induces plasma membrane permeability during apoptosis. Phosphorylated at Tyr-198 by SRC. Phosphorylation activates ATP release. Constitutively phosphorylated in vascular smooth muscle cells. As to expression, expressed in the eye, thyroid, prostate, kidney and liver. Abundantly expressed in the CNS, including hippocampus, olfactory bulb, cortex, cerebellum and white matter.

The protein resides in the cell membrane. It localises to the endoplasmic reticulum membrane. The enzyme catalyses Ca(2+)(in) = Ca(2+)(out). It catalyses the reaction ATP(in) = ATP(out). The catalysed reaction is K(+)(in) = K(+)(out). It carries out the reaction chloride(in) = chloride(out). The enzyme catalyses iodide(out) = iodide(in). It catalyses the reaction Na(+)(in) = Na(+)(out). The catalysed reaction is nitrate(in) = nitrate(out). It carries out the reaction L-aspartate(out) = L-aspartate(in). The enzyme catalyses L-glutamate(out) = L-glutamate(in). It catalyses the reaction D-gluconate(in) = D-gluconate(out). The catalysed reaction is spermidine(in) = spermidine(out). Functionally, ion channel involved in a variety of physiological functions such as blood pressure regulation, apoptotic cell clearance and oogenesis. Forms anion-selective channels with relatively low conductance and an order of permeabilities: nitrate&gt;iodide&gt;chlroride&gt;&gt;aspartate=glutamate=gluconate. Can release ATP upon activation through phosphorylation or cleavage at C-terminus. May play a role as a Ca(2+)-leak channel to regulate ER Ca(2+) homeostasis. Its function is as follows. During apoptosis, the C terminal tail is cleaved by caspases, which opens the main pore acting as a large-pore ATP efflux channel with a broad distribution, which allows the regulated release of molecules and ions smaller than 1 kDa, such as nucleotides ATP and UTP, and selective plasma membrane permeability to attract phagocytes that engulf the dying cells. The sequence is that of Pannexin-1 (Panx1) from Rattus norvegicus (Rat).